We begin with the raw amino-acid sequence, 50 residues long: Ampulexin 2 (50 aa).

Positions 1 to 26 (MKAIMVLFYVMTLTIIGSFSMVSGSP) are cleaved as a signal peptide.

In terms of assembly, dimer; disulfide-linked. As to expression, expressed in venom sac and, to a lesser extent, in venom gland. Not expressed in brain.

The protein localises to the secreted. Its function is as follows. Amphipathic peptide which probably adopts an alpha-helical structure. Has no antimicrobial activity against E.coli DH5alpha or B.thuringiensis. Is not cytotoxic in vitro. This chain is Ampulexin 2, found in Ampulex compressa (Emerald cockroach wasp).